The primary structure comprises 307 residues: Ribosomal protein L11 methyltransferase (307 aa).

4 residues coordinate S-adenosyl-L-methionine: Thr-162, Gly-183, Asp-205, and Asn-244.

This sequence belongs to the methyltransferase superfamily. PrmA family.

It is found in the cytoplasm. It carries out the reaction L-lysyl-[protein] + 3 S-adenosyl-L-methionine = N(6),N(6),N(6)-trimethyl-L-lysyl-[protein] + 3 S-adenosyl-L-homocysteine + 3 H(+). In terms of biological role, methylates ribosomal protein L11. The chain is Ribosomal protein L11 methyltransferase from Bordetella parapertussis (strain 12822 / ATCC BAA-587 / NCTC 13253).